Here is a 240-residue protein sequence, read N- to C-terminus: MLQNQSHTLIGVTKTAVFFLYAALAIIGFAIGYFIPQIAKWALSLPWIPLEGPLRLITSFQGSTASFITALLGMCAGIWFAHSVIAMLLSVKITDHTVEFIKGKKVQTIHSDDIALVFMDHKRLVLLGTAGYELVREEIDEKPVNVEKAFRQHHYEWATDGDPFKDQFRRWIPDAPDLSQGAHALLKARHKALQDEEKDDIEEFRLELAQLGIVVRDEGTRQYWRKAETYPPKIQLGEGL.

The next 2 membrane-spanning stretches (helical) occupy residues 16–36 (AVFF…YFIP) and 67–87 (FITA…VIAM).

Its subcellular location is the cell membrane. This is an uncharacterized protein from Bacillus subtilis (strain 168).